Reading from the N-terminus, the 883-residue chain is MQKIMHISVLLSPVLWGLIFGVSSNSIQIGGLFPRGADQEYSAFRVGMVQFSTSEFRLTPHIDNLEVANSFAVTNAFCSQFSRGVYAIFGFYDKKSVNTITSFCGTLHVSFITPSFPTDGTHPFVIQMRPDLKGALLSLIEYYQWDKFAYLYDSDRGLSTLQAVLDSAAEKKWQVTAINVGNINNDKKDETYRSLFQDLELKKERRVILDCERDKVNDIVDQVITIGKHVKGYHYIIANLGFTDGDLLKIQFGGANVSGFQIVDYDDSLVSKFIERWSTLEEKEYPGAHTATIKYTSALTYDAVQVMTEAFRNLRKQRIEISRRGNAGDCLANPAVPWGQGVEIERALKQVQVEGLSGNIKFDQNGKRINYTINIMELKTNGPRKIGYWSEVDKMVVTLTELPSGNDTSGLENKTVVVTTILESPYVMMKKNHEMLEGNERYEGYCVDLAAEIAKHCGFKYKLTIVGDGKYGARDADTKIWNGMVGELVYGKADIAIAPLTITLVREEVIDFSKPFMSLGISIMIKKPQKSKPGVFSFLDPLAYEIWMCIVFAYIGVSVVLFLVSRFSPYEWHTEEFEDGRETQSSESTNEFGIFNSLWFSLGAFMQQGCDISPRSLSGRIVGGVWWFFTLIIISSYTANLAAFLTVERMVSPIESAEDLSKQTEIAYGTLDSGSTKEFFRRSKIAVFDKMWTYMRSAEPSVFVRTTAEGVARVRKSKGKYAYLLESTMNEYIEQRKPCDTMKVGGNLDSKGYGIATPKGSSLGNAVNLAVLKLNEQGLLDKLKNKWWYDKGECGSGGGDSKEKTSALSLSNVAGVFYILVGGLGLAMLVALIEFCYKSRAEAKRMKVAKNPQNINPSSSQNSQNFATYKEGYNVYGIESVKI.

A signal peptide spans Met1–Gly21. At Val22 to Ala543 the chain is on the extracellular side. Cys78 and Cys330 form a disulfide bridge. 4 N-linked (GlcNAc...) asparagine glycosylation sites follow: Asn256, Asn370, Asn406, and Asn413. L-glutamate contacts are provided by Pro499, Thr501, and Arg506. The chain crosses the membrane as a helical span at residues Tyr544–Val564. At Ser565–Glu591 the chain is on the cytoplasmic side. The segment at residues Phe592 to Gln607 is an intramembrane region (helical; Pore-forming). The stretch at Gln608 to Cys610 is an intramembrane region. Cys610 is lipidated: S-palmitoyl cysteine. The Cytoplasmic portion of the chain corresponds to Asp611–Ser616. Residues Leu617 to Tyr637 traverse the membrane as a helical segment. Over Thr638 to Asn812 the chain is Extracellular. Residues Ser675 and Thr676 each coordinate L-glutamate. Ser683 is subject to Phosphoserine; by PKC. Ser717 carries the phosphoserine; by PKG modification. Glu726 lines the L-glutamate pocket. An intrachain disulfide couples Cys739 to Cys794. A helical membrane pass occupies residues Val813–Ile833. At Glu834–Ile883 the chain is on the cytoplasmic side. A lipid anchor (S-palmitoyl cysteine) is attached at Cys836. Residues Ser860 and Ser863 each carry the phosphoserine modification. Residues Ala867–Gly877 form a required for interaction with IQSEC1 region. Tyr876 bears the Phosphotyrosine mark. Phosphoserine is present on Ser880.

It belongs to the glutamate-gated ion channel (TC 1.A.10.1) family. GRIA2 subfamily. As to quaternary structure, homotetramer or heterotetramer of pore-forming glutamate receptor subunits. Tetramers may be formed by the dimerization of dimers. May interact with MPP4. Forms a ternary complex with GRIP1 and CSPG4. Interacts with ATAD1 in an ATP-dependent manner. ATAD1-catalyzed ATP hydrolysis disrupts binding to ATAD1 and to GRIP1 and leads to AMPAR complex disassembly. Interacts with GRIP2. Interacts with GRIP1. Interacts with NSF via its C-terminus. Interacts with CACNG2, PICK1 and GRIP2. Interacts with GRIA1 and SYNDIG1. Part of a complex containing GRIA2, NSF and NAPA and/or NAPB. Interacts with SNX27 (via PDZ domain); the interaction is required for recycling to the plasma membrane when endocytosed and prevent degradation in lysosomes. Interacts with LRFN1. Found in a complex with GRIA1, GRIA3, GRIA4, CNIH2, CNIH3, CACNG2, CACNG3, CACNG4, CACNG5, CACNG7 and CACNG8. Interacts with CACNG5. Interacts with OLFM2. Interacts with AP4B1, AP4E1 and AP4M1; probably indirect it mediates the somatodendritic localization of GRIA2 in neurons. Forms a complex with GRIP1, NSG1 and STX12; controls the intracellular fate of AMPAR and the endosomal sorting of the GRIA2 subunit toward recycling and membrane targeting. Interacts with IQSEC1; the interaction is required for ARF6 activation. Interacts (heterotetramer form) with CNIH2 and CNIH3; this interaction promotes expression at the plasma membrane and extensively modulates their gating properties by slowing deactivation and desensitization kinetics. Palmitoylated. Depalmitoylated upon L-glutamate stimulation. Cys-610 palmitoylation leads to Golgi retention and decreased cell surface expression. In contrast, Cys-836 palmitoylation does not affect cell surface expression but regulates stimulation-dependent endocytosis. In terms of processing, phosphorylation at Tyr-876 is required for interaction with IQSEC1 and ARF6 activation, which in turn triggers AMPAR internalization for persistent synaptic depression. Post-translationally, ubiquitinated by RNF167, leading to its degradation. N-glycosylated. As to expression, detected in forebrain. Detected in dendrites of neuronal cells. Expressed in the pyramidal cell layers of CA1 and CA3 and in the granule cell layer of the dentate gyrus.

The protein localises to the cell membrane. It is found in the postsynaptic cell membrane. It localises to the postsynaptic density membrane. It carries out the reaction Ca(2+)(in) = Ca(2+)(out). The catalysed reaction is Na(+)(in) = Na(+)(out). Functionally, ionotropic glutamate receptor that functions as a ligand-gated cation channel, gated by L-glutamate and glutamatergic agonists such as alpha-amino-3-hydroxy-5-methyl-4-isoxazolepropionic acid (AMPA), quisqualic acid, and kainic acid. L-glutamate acts as an excitatory neurotransmitter at many synapses in the central nervous system and plays an important role in fast excitatory synaptic transmission. Binding of the excitatory neurotransmitter L-glutamate induces a conformation change, leading to the opening of the cation channel, and thereby converts the chemical signal to an electrical impulse upon entry of monovalent and divalent cations such as sodium and calcium. The receptor then desensitizes rapidly and enters in a transient inactive state, characterized by the presence of bound agonist. In the presence of CACNG4 or CACNG7 or CACNG8, shows resensitization which is characterized by a delayed accumulation of current flux upon continued application of L-glutamate. Through complex formation with NSG1, GRIP1 and STX12 controls the intracellular fate of AMPAR and the endosomal sorting of the GRIA2 subunit toward recycling and membrane targeting. This Rattus norvegicus (Rat) protein is Glutamate receptor 2.